A 213-amino-acid polypeptide reads, in one-letter code: Uridine kinase (213 aa).

Residue 15 to 22 participates in ATP binding; sequence GASASGKS.

Belongs to the uridine kinase family.

It localises to the cytoplasm. It carries out the reaction uridine + ATP = UMP + ADP + H(+). The catalysed reaction is cytidine + ATP = CMP + ADP + H(+). It functions in the pathway pyrimidine metabolism; CTP biosynthesis via salvage pathway; CTP from cytidine: step 1/3. Its pathway is pyrimidine metabolism; UMP biosynthesis via salvage pathway; UMP from uridine: step 1/1. The polypeptide is Uridine kinase (Salmonella newport (strain SL254)).